The primary structure comprises 443 residues: Ribosomal protein uS12 methylthiotransferase RimO (443 aa).

Positions P5–P115 constitute an MTTase N-terminal domain. 6 residues coordinate [4Fe-4S] cluster: C14, C50, C79, C147, C151, and C154. Positions L133–A374 constitute a Radical SAM core domain. In terms of domain architecture, TRAM spans Q377 to C443.

It belongs to the methylthiotransferase family. RimO subfamily. Requires [4Fe-4S] cluster as cofactor.

It is found in the cytoplasm. It catalyses the reaction L-aspartate(89)-[ribosomal protein uS12]-hydrogen + (sulfur carrier)-SH + AH2 + 2 S-adenosyl-L-methionine = 3-methylsulfanyl-L-aspartate(89)-[ribosomal protein uS12]-hydrogen + (sulfur carrier)-H + 5'-deoxyadenosine + L-methionine + A + S-adenosyl-L-homocysteine + 2 H(+). Functionally, catalyzes the methylthiolation of an aspartic acid residue of ribosomal protein uS12. The polypeptide is Ribosomal protein uS12 methylthiotransferase RimO (Actinobacillus pleuropneumoniae serotype 7 (strain AP76)).